We begin with the raw amino-acid sequence, 377 residues long: Chaperone protein DnaJ (377 aa).

Residues 5–70 form the J domain; the sequence is DFYEVLGVDR…EKRSAYDRMG (66 aa). A CR-type zinc finger spans residues 136-214; that stretch reads GCKKEISFTA…CHGTGVKDKS (79 aa). Zn(2+) contacts are provided by cysteine 149, cysteine 152, cysteine 166, cysteine 169, cysteine 188, cysteine 191, cysteine 202, and cysteine 205. CXXCXGXG motif repeat units follow at residues 149–156, 166–173, 188–195, and 202–209; these read CETCDGKG, CSTCGGHG, CPNCGGSG, and CNDCHGTG. Positions 353–377 are disordered; the sequence is LDGDSKHHQSPKKKSFFEKLGDLFD. Over residues 367–377 the composition is skewed to basic and acidic residues; the sequence is SFFEKLGDLFD.

This sequence belongs to the DnaJ family. In terms of assembly, homodimer. The cofactor is Zn(2+).

Its subcellular location is the cytoplasm. Its function is as follows. Participates actively in the response to hyperosmotic and heat shock by preventing the aggregation of stress-denatured proteins and by disaggregating proteins, also in an autonomous, DnaK-independent fashion. Unfolded proteins bind initially to DnaJ; upon interaction with the DnaJ-bound protein, DnaK hydrolyzes its bound ATP, resulting in the formation of a stable complex. GrpE releases ADP from DnaK; ATP binding to DnaK triggers the release of the substrate protein, thus completing the reaction cycle. Several rounds of ATP-dependent interactions between DnaJ, DnaK and GrpE are required for fully efficient folding. Also involved, together with DnaK and GrpE, in the DNA replication of plasmids through activation of initiation proteins. This is Chaperone protein DnaJ from Psychrobacter sp. (strain PRwf-1).